A 150-amino-acid chain; its full sequence is Phosphopantetheine adenylyltransferase (150 aa).

Residue Ser-10 participates in substrate binding. Residues 10 to 11 and His-18 each bind ATP; that span reads SF. Positions 42, 74, and 88 each coordinate substrate. Residues 89–91, Glu-99, and 124–130 contribute to the ATP site; these read GLR and LAYISSS.

The protein belongs to the bacterial CoaD family. As to quaternary structure, homohexamer. It depends on Mg(2+) as a cofactor.

The protein localises to the cytoplasm. It catalyses the reaction (R)-4'-phosphopantetheine + ATP + H(+) = 3'-dephospho-CoA + diphosphate. It functions in the pathway cofactor biosynthesis; coenzyme A biosynthesis; CoA from (R)-pantothenate: step 4/5. Reversibly transfers an adenylyl group from ATP to 4'-phosphopantetheine, yielding dephospho-CoA (dPCoA) and pyrophosphate. The chain is Phosphopantetheine adenylyltransferase from Cytophaga hutchinsonii (strain ATCC 33406 / DSM 1761 / CIP 103989 / NBRC 15051 / NCIMB 9469 / D465).